We begin with the raw amino-acid sequence, 172 residues long: Small ribosomal subunit protein uS5 (172 aa).

Residues leucine 16–valine 79 enclose the S5 DRBM domain.

The protein belongs to the universal ribosomal protein uS5 family. Part of the 30S ribosomal subunit. Contacts proteins S4 and S8.

Its function is as follows. With S4 and S12 plays an important role in translational accuracy. In terms of biological role, located at the back of the 30S subunit body where it stabilizes the conformation of the head with respect to the body. The protein is Small ribosomal subunit protein uS5 of Chlorobium phaeobacteroides (strain DSM 266 / SMG 266 / 2430).